The sequence spans 366 residues: Histone-lysine N-methyltransferase SETD7 (366 aa).

MORN repeat units follow at residues 36 to 58 (FEGN…DGST), 59 to 81 (LEGY…DGGV), and 106 to 128 (FKGQ…DGGS). In terms of domain architecture, SET spans 214 to 336 (ERVYVAESLI…ADEELTVAYG (123 aa)). Residues 226-228 (AGE), asparagine 296, histidine 297, and glutamate 356 contribute to the S-adenosyl-L-methionine site.

Belongs to the class V-like SAM-binding methyltransferase superfamily. Histone-lysine methyltransferase family. SET7 subfamily. In terms of assembly, interacts with IPF1/PDX-1. In terms of tissue distribution, widely expressed. Expressed in pancreatic islets.

It localises to the nucleus. Its subcellular location is the chromosome. It carries out the reaction L-lysyl(4)-[histone H3] + S-adenosyl-L-methionine = N(6)-methyl-L-lysyl(4)-[histone H3] + S-adenosyl-L-homocysteine + H(+). The catalysed reaction is L-lysyl-[protein] + S-adenosyl-L-methionine = N(6)-methyl-L-lysyl-[protein] + S-adenosyl-L-homocysteine + H(+). Functionally, histone methyltransferase that specifically monomethylates 'Lys-4' of histone H3. H3 'Lys-4' methylation represents a specific tag for epigenetic transcriptional activation. Plays a central role in the transcriptional activation of genes such as collagenase or insulin. Recruited by IPF1/PDX-1 to the insulin promoter, leading to activate transcription. Also has methyltransferase activity toward non-histone proteins such as CGAS, p53/TP53, TAF10, and possibly TAF7 by recognizing and binding the [KR]-[STA]-K in substrate proteins. Monomethylates 'Lys-189' of TAF10, leading to increase the affinity of TAF10 for RNA polymerase II. Monomethylates 'Lys-372' of p53/TP53, stabilizing p53/TP53 and increasing p53/TP53-mediated transcriptional activation. Monomethylates 'Lys-491' of CGAS, promoting interaction between SGF29 and CGAS. The protein is Histone-lysine N-methyltransferase SETD7 (SETD7) of Homo sapiens (Human).